The chain runs to 358 residues: NADH-quinone oxidoreductase subunit H (358 aa).

The next 8 membrane-spanning stretches (helical) occupy residues Ile-20–Ile-40, Ala-95–Ile-115, Ile-128–Gly-148, Ile-168–Met-188, Val-206–Val-226, Gly-253–Leu-273, Trp-290–Tyr-310, and Val-334–Leu-354.

The protein belongs to the complex I subunit 1 family. In terms of assembly, NDH-1 is composed of 14 different subunits. Subunits NuoA, H, J, K, L, M, N constitute the membrane sector of the complex.

Its subcellular location is the cell inner membrane. The enzyme catalyses a quinone + NADH + 5 H(+)(in) = a quinol + NAD(+) + 4 H(+)(out). In terms of biological role, NDH-1 shuttles electrons from NADH, via FMN and iron-sulfur (Fe-S) centers, to quinones in the respiratory chain. The immediate electron acceptor for the enzyme in this species is believed to be ubiquinone. Couples the redox reaction to proton translocation (for every two electrons transferred, four hydrogen ions are translocated across the cytoplasmic membrane), and thus conserves the redox energy in a proton gradient. This subunit may bind ubiquinone. The sequence is that of NADH-quinone oxidoreductase subunit H from Neisseria meningitidis serogroup A / serotype 4A (strain DSM 15465 / Z2491).